The chain runs to 281 residues: Elongation factor Ts (281 aa).

The tract at residues 80 to 83 (TDFV) is involved in Mg(2+) ion dislocation from EF-Tu.

The protein belongs to the EF-Ts family.

The protein localises to the cytoplasm. Associates with the EF-Tu.GDP complex and induces the exchange of GDP to GTP. It remains bound to the aminoacyl-tRNA.EF-Tu.GTP complex up to the GTP hydrolysis stage on the ribosome. The sequence is that of Elongation factor Ts from Vibrio campbellii (strain ATCC BAA-1116).